Reading from the N-terminus, the 480-residue chain is Iroquois-class homeodomain protein IRX-1 (480 aa).

A DNA-binding region (homeobox; TALE-type) is located at residues 125 to 188 (YGDPGRPKNA…ANARRRLKKE (64 aa)). 3 disordered regions span residues 190-268 (KVTW…QGSP), 280-354 (SPLG…PLQH), and 401-480 (PHGP…LPSA). Residues 210 to 228 (TEGDPEKAEDDEEIDLESI) are compositionally biased toward acidic residues. Over residues 229 to 239 (DIDKIDEHDGD) the composition is skewed to basic and acidic residues. Ser241 carries the phosphoserine modification. Low complexity-rich tracts occupy residues 252 to 262 (PHAPAAPSALA) and 340 to 351 (HPGAHGPSAGAP). The span at 404 to 417 (PHLPAPPPPQPPVA) shows a compositional bias: pro residues.

This sequence belongs to the TALE/IRO homeobox family.

The protein localises to the nucleus. The sequence is that of Iroquois-class homeodomain protein IRX-1 (IRX1) from Homo sapiens (Human).